A 280-amino-acid polypeptide reads, in one-letter code: Delta(3,5)-Delta(2,4)-dienoyl-CoA isomerase (280 aa).

Catalysis depends on glutamate 154, which acts as the Proton donor/acceptor. Positions 278–280 match the Peroxisome targeting signal (PTS1) motif; the sequence is HKL.

It belongs to the enoyl-CoA hydratase/isomerase family.

Its subcellular location is the cytoplasm. The protein localises to the cytosol. The protein resides in the peroxisome. The catalysed reaction is a (3E,5Z)-dienoyl-CoA = a (2E,4E)-(5,6-saturated)-dienoyl-CoA. It functions in the pathway lipid metabolism; fatty acid beta-oxidation. Its function is as follows. Peroxisomal di-isomerase that is involved in fatty acid metabolism enzyme by converting 3,5-dienoyl-CoAs to the corresponding 2,4-dienoyl-CoAs. Involved in fatty acid beta-oxidation, which is important for lipid droplets degradation and infectious growth. This chain is Delta(3,5)-Delta(2,4)-dienoyl-CoA isomerase, found in Pyricularia oryzae (strain 70-15 / ATCC MYA-4617 / FGSC 8958) (Rice blast fungus).